Here is a 451-residue protein sequence, read N- to C-terminus: Phosphoglucosamine mutase (451 aa).

Ser107 (phosphoserine intermediate) is an active-site residue. 4 residues coordinate Mg(2+): Ser107, Asp246, Asp248, and Asp250. Ser107 is modified (phosphoserine).

It belongs to the phosphohexose mutase family. The cofactor is Mg(2+). Post-translationally, activated by phosphorylation.

It catalyses the reaction alpha-D-glucosamine 1-phosphate = D-glucosamine 6-phosphate. Its function is as follows. Catalyzes the conversion of glucosamine-6-phosphate to glucosamine-1-phosphate. The polypeptide is Phosphoglucosamine mutase (Azoarcus sp. (strain BH72)).